A 444-amino-acid chain; its full sequence is E3 ubiquitin-protein ligase RNFT2 (444 aa).

Residues 1-181 (MWLFTVNQVL…ILLAKLCFQH (181 aa)) lie on the Extracellular side of the membrane. Disordered regions lie at residues 13–41 (MQRR…ASVD) and 92–149 (PASR…PGTP). Over residues 107–121 (YHHRQPHHHFHHGGH) the composition is skewed to basic residues. The segment covering 131-140 (GGDHRGHSEE) has biased composition (basic and acidic residues). The helical transmembrane segment at 182 to 202 (KLGIAVCIGMASTFAYANSTL) threads the bilayer. Residues 203–214 (REQVSLKEKRSV) are Cytoplasmic-facing. A helical transmembrane segment spans residues 215 to 235 (LVILWILAFLAGNTLYVLYTF). Residues 236–255 (SSQQLYNSLIFLKPNLEMLD) lie on the Extracellular side of the membrane. A helical transmembrane segment spans residues 256–276 (FFDLLWIVGIADFVLKYITIA). Residues 277–329 (LKCLIVALPKIILAVKSKGKFYLVIEELSQLFRSLVPIQLWYKYIMGDDSSNS) lie on the Cytoplasmic side of the membrane. The chain crosses the membrane as a helical span at residues 330 to 350 (YFLGGVLIVLYSLCKSFDICG). Residues 351-444 (RVGGVRKALK…GATSAHFQVY (94 aa)) are Extracellular-facing. An RING-type zinc finger spans residues 384–422 (CAICQAEFREPLILLCQHVFCEECLCLWLDRERTCPLCR).

Its subcellular location is the membrane. Functionally, E3 ubiquitin-protein ligase that negatively regulates IL3-dependent cellular responses through IL3RA ubiquitination and degradation by the proteasome, having an anti-inflammatory effect. The chain is E3 ubiquitin-protein ligase RNFT2 from Homo sapiens (Human).